We begin with the raw amino-acid sequence, 192 residues long: Fe/S biogenesis protein NfuA (192 aa).

[4Fe-4S] cluster contacts are provided by Cys-150 and Cys-153.

It belongs to the NfuA family. Homodimer. [4Fe-4S] cluster serves as cofactor.

Functionally, involved in iron-sulfur cluster biogenesis. Binds a 4Fe-4S cluster, can transfer this cluster to apoproteins, and thereby intervenes in the maturation of Fe/S proteins. Could also act as a scaffold/chaperone for damaged Fe/S proteins. This chain is Fe/S biogenesis protein NfuA, found in Vesicomyosocius okutanii subsp. Calyptogena okutanii (strain HA).